Consider the following 522-residue polypeptide: Peptide chain release factor 3 (522 aa).

The region spanning 10-277 (ASRKTFAIIS…TFVDFAPSPS (268 aa)) is the tr-type G domain. GTP contacts are provided by residues 19-26 (SHPDAGKT), 87-91 (DTPGH), and 141-144 (NKMD).

This sequence belongs to the TRAFAC class translation factor GTPase superfamily. Classic translation factor GTPase family. PrfC subfamily.

The protein resides in the cytoplasm. Its function is as follows. Increases the formation of ribosomal termination complexes and stimulates activities of RF-1 and RF-2. It binds guanine nucleotides and has strong preference for UGA stop codons. It may interact directly with the ribosome. The stimulation of RF-1 and RF-2 is significantly reduced by GTP and GDP, but not by GMP. The chain is Peptide chain release factor 3 from Listeria innocua serovar 6a (strain ATCC BAA-680 / CLIP 11262).